Reading from the N-terminus, the 577-residue chain is Pentatricopeptide repeat-containing protein At1g06143 (577 aa).

PPR repeat units lie at residues 59 to 89 (DCRLMNQFITACTSFKRLDLAVSTMTQMQEP), 90 to 124 (NVFVYNALFKGFVTCSHPIRSLELYVRMLRDSVSP), 125 to 155 (SSYTYSSLVKASSFASRFGESLQAHIWKFGF), 158 to 192 (HVKIQTTLIDFYSATGRIREARKVFDEMPERDDIA), 193 to 219 (WTTMVSAYRRVLDMDSANSLANQMSEK), 220 to 250 (NEATSNCLINGYMGLGNLEQAESLFNQMPVK), 251 to 285 (DIISWTTMIKGYSQNKRYREAIAVFYKMMEEGIIP), 286 to 320 (DEVTMSTVISACAHLGVLEIGKEVHMYTLQNGFVL), 321 to 351 (DVYIGSALVDMYSKCGSLERALLVFFNLPKK), 352 to 386 (NLFCWNSIIEGLAAHGFAQEALKMFAKMEMESVKP), 387 to 417 (NAVTFVSVFTACTHAGLVDEGRRIYRSMIDD), and 423 to 453 (NVEHYGGMVHLFSKAGLIYEALELIGNMEFE). Positions 458–534 (IWGALLDGCR…CPGTSSIRID (77 aa)) are type E motif. The interval 535-565 (KRDHLFAAADKSHSASDEVCLLLDEIYDQMG) is type E(+) motif.

Belongs to the PPR family. PCMP-E subfamily.

This Arabidopsis thaliana (Mouse-ear cress) protein is Pentatricopeptide repeat-containing protein At1g06143 (EMB1444).